The following is a 385-amino-acid chain: MTPQQSAQRLFQEKFNCTPTLNVYAPGRVNIIGEHTDYNDGFVMPCAINYGTAISGRKRDDSRFKVYAGDLQQWDEFDLAQEITPDSSKKWTGYVRGVVKFVQTHCPDFKCGADLVISGNVPLSAGLSSSASLEVAVGKFCQQLGNLPLTNTEIALIGQKAENQFVGCQCGNMDQLISALGQKDHLLMIDCRSLETIPTPIPANVAVMIVNSHVKHDLVAGEYNTRRQQCEVAAKFFGVKALRDVSLAQFKQREAELTALDPEVAKRARHVVTENQRVLDAVKALQSGNLALLGELMAQSHESMRDDFEITVPQIDYLVELAQIAIGKTGGARMTGGGFGGCIVAVAPVEKVEAVRQIIADNYAQQTGLKEDFYVCTASQGVSVC.

A substrate-binding site is contributed by 34–37 (EHTD). 124 to 130 (SAGLSSS) contacts ATP. Mg(2+) is bound by residues serine 130 and glutamate 162. Aspartate 174 (proton acceptor) is an active-site residue. Residue tyrosine 223 participates in substrate binding.

The protein belongs to the GHMP kinase family. GalK subfamily.

The protein localises to the cytoplasm. The catalysed reaction is alpha-D-galactose + ATP = alpha-D-galactose 1-phosphate + ADP + H(+). Its pathway is carbohydrate metabolism; galactose metabolism. In terms of biological role, catalyzes the transfer of the gamma-phosphate of ATP to D-galactose to form alpha-D-galactose-1-phosphate (Gal-1-P). This Pasteurella multocida (strain Pm70) protein is Galactokinase.